The chain runs to 209 residues: Octanoyltransferase (209 aa).

Positions 30–209 constitute a BPL/LPL catalytic domain; it reads VNEPEIVYLV…IQTEFNKIFT (180 aa). Residues 69-76, 143-145, and 156-158 each bind substrate; these read RGGKFTFH, AIG, and GVA. Catalysis depends on C174, which acts as the Acyl-thioester intermediate.

This sequence belongs to the LipB family.

The protein localises to the cytoplasm. The catalysed reaction is octanoyl-[ACP] + L-lysyl-[protein] = N(6)-octanoyl-L-lysyl-[protein] + holo-[ACP] + H(+). The protein operates within protein modification; protein lipoylation via endogenous pathway; protein N(6)-(lipoyl)lysine from octanoyl-[acyl-carrier-protein]: step 1/2. Catalyzes the transfer of endogenously produced octanoic acid from octanoyl-acyl-carrier-protein onto the lipoyl domains of lipoate-dependent enzymes. Lipoyl-ACP can also act as a substrate although octanoyl-ACP is likely to be the physiological substrate. The polypeptide is Octanoyltransferase (Rickettsia canadensis (strain McKiel)).